An 85-amino-acid chain; its full sequence is Large ribosomal subunit protein bL27 (85 aa).

It belongs to the bacterial ribosomal protein bL27 family.

This Xylella fastidiosa (strain 9a5c) protein is Large ribosomal subunit protein bL27.